Consider the following 513-residue polypeptide: MQLNSTEISELIKKRIAQFEVINEARNTGTIVSVSDGIIRIHGLSDVMQGEMIALPGNRYAMALNLERDSVGAVVMGPYSDLAEGMEVQCTGRILEVPVGRGLLGRVVNTLGQPIDGKGEIKNDGFSPVEVIAPGVIERKSVDQPVQTGYKAVDSMVPIGRGQRELIIGDRQTGKTALAIDAIINQRDSGIKCIYVAIGQKASTIANVVRKLEEHGALQNTIVVVASASESAALQYLAPYSGCAMGEYFRDRGEDALIVYDDLSKQAVAYRQISLLLRRPPGREAFPGDVFYLHSRLLERASRVSEEYVEKFTKGEVKGKTGSLTALPIIETQAGDVSAFVPTNVISITDGQIFLESNLFNSGIRPAVNPGISVSRVGGAAQTKVVKKLAGGIRTALAQYRELAAFAQFASDLDEATRKQLSHGQKVTELLKQKQYSPLSVAEQALVLFAVEFGYLDDVELNRIGTFETALLEYANYNYADFMAELTKTGNYDDEIKNTLKTVLDQFKANVAW.

Residue G169–T176 coordinates ATP.

It belongs to the ATPase alpha/beta chains family. As to quaternary structure, F-type ATPases have 2 components, CF(1) - the catalytic core - and CF(0) - the membrane proton channel. CF(1) has five subunits: alpha(3), beta(3), gamma(1), delta(1), epsilon(1). CF(0) has three main subunits: a(1), b(2) and c(9-12). The alpha and beta chains form an alternating ring which encloses part of the gamma chain. CF(1) is attached to CF(0) by a central stalk formed by the gamma and epsilon chains, while a peripheral stalk is formed by the delta and b chains.

Its subcellular location is the cell inner membrane. The enzyme catalyses ATP + H2O + 4 H(+)(in) = ADP + phosphate + 5 H(+)(out). Functionally, produces ATP from ADP in the presence of a proton gradient across the membrane. The alpha chain is a regulatory subunit. The protein is ATP synthase subunit alpha of Histophilus somni (strain 2336) (Haemophilus somnus).